We begin with the raw amino-acid sequence, 309 residues long: Transcription initiation factor IIB 1 (309 aa).

Repeat copies occupy residues 125–208 (NELE…LREL) and 219–300 (DYVT…ELTQ).

Belongs to the TFIIB family.

Stabilizes TBP binding to an archaeal box-A promoter. Also responsible for recruiting RNA polymerase II to the pre-initiation complex (DNA-TBP-TFIIB). This is Transcription initiation factor IIB 1 from Saccharolobus solfataricus (strain ATCC 35092 / DSM 1617 / JCM 11322 / P2) (Sulfolobus solfataricus).